The primary structure comprises 295 residues: Methionine aminopeptidase (295 aa).

Residue His-63 participates in substrate binding. A divalent metal cation contacts are provided by Asp-83, Asp-94, and His-154. His-162 contacts substrate. Positions 188 and 281 each coordinate a divalent metal cation.

Belongs to the peptidase M24A family. Methionine aminopeptidase archaeal type 2 subfamily. In terms of assembly, monomer. Fe(2+) is required as a cofactor. Requires Co(2+) as cofactor. It depends on Ni(2+) as a cofactor. The cofactor is Mn(2+).

The catalysed reaction is Release of N-terminal amino acids, preferentially methionine, from peptides and arylamides.. Removes the N-terminal methionine from nascent proteins. The N-terminal methionine is often cleaved when the second residue in the primary sequence is small and uncharged (Met-Ala-, Cys, Gly, Pro, Ser, Thr, or Val). In Thermococcus onnurineus (strain NA1), this protein is Methionine aminopeptidase.